Consider the following 188-residue polypeptide: Elongation factor P (188 aa).

The protein belongs to the elongation factor P family.

The protein localises to the cytoplasm. The protein operates within protein biosynthesis; polypeptide chain elongation. In terms of biological role, involved in peptide bond synthesis. Stimulates efficient translation and peptide-bond synthesis on native or reconstituted 70S ribosomes in vitro. Probably functions indirectly by altering the affinity of the ribosome for aminoacyl-tRNA, thus increasing their reactivity as acceptors for peptidyl transferase. This Cereibacter sphaeroides (strain KD131 / KCTC 12085) (Rhodobacter sphaeroides) protein is Elongation factor P.